Here is a 170-residue protein sequence, read N- to C-terminus: Photosystem II extrinsic protein V (170 aa).

The first 33 residues, 1–33, serve as a signal peptide directing secretion; that stretch reads MVSVFSSLRQSFKGLLVLVPVLIGLAFISPAEA. The heme c site is built by Cys70, Cys73, His74, and Met137.

Belongs to the cytochrome c family. PsbV subfamily. In terms of assembly, PSII is composed of 1 copy each of membrane proteins PsbA, PsbB, PsbC, PsbD, PsbE, PsbF, PsbH, PsbI, PsbJ, PsbK, PsbL, PsbM, PsbT, PsbX, PsbY, PsbZ, Psb30/Ycf12, peripheral proteins PsbO, CyanoQ (PsbQ), PsbU, PsbV and a large number of cofactors. It forms dimeric complexes. Heme c is required as a cofactor.

It localises to the cellular thylakoid membrane. Functionally, one of the extrinsic, lumenal subunits of photosystem II (PSII). PSII is a light-driven water plastoquinone oxidoreductase, using light energy to abstract electrons from H(2)O, generating a proton gradient subsequently used for ATP formation. The extrinsic proteins stabilize the structure of photosystem II oxygen-evolving complex (OEC), the ion environment of oxygen evolution and protect the OEC against heat-induced inactivation. Low-potential cytochrome c that plays a role in the OEC of PSII. This is Photosystem II extrinsic protein V from Synechococcus sp. (strain CC9902).